A 570-amino-acid polypeptide reads, in one-letter code: Hydroxylamine reductase (570 aa).

Residues cysteine 5, cysteine 8, cysteine 17, and cysteine 23 each coordinate [4Fe-4S] cluster. Residues histidine 266, glutamate 290, cysteine 334, cysteine 425, cysteine 453, cysteine 478, glutamate 513, and lysine 515 each contribute to the hybrid [4Fe-2O-2S] cluster site. The residue at position 425 (cysteine 425) is a Cysteine persulfide.

This sequence belongs to the HCP family. Requires [4Fe-4S] cluster as cofactor. Hybrid [4Fe-2O-2S] cluster is required as a cofactor.

Its subcellular location is the cytoplasm. It catalyses the reaction A + NH4(+) + H2O = hydroxylamine + AH2 + H(+). Functionally, catalyzes the reduction of hydroxylamine to form NH(3) and H(2)O. This is Hydroxylamine reductase from Clostridium botulinum (strain Okra / Type B1).